A 245-amino-acid polypeptide reads, in one-letter code: Actin-like protein 10 (245 aa).

Belongs to the actin family.

This is Actin-like protein 10 (ACTL10) from Homo sapiens (Human).